The sequence spans 215 residues: Adenylate kinase (215 aa).

10–15 (GAGKGT) provides a ligand contact to ATP. The segment at 30 to 59 (STGDMLRAAVKAGTPIGLKAKAVMEAGELV) is NMP. Residues threonine 31, arginine 36, 57–59 (ELV), 85–88 (GYPR), and glutamine 92 contribute to the AMP site. Positions 126–163 (GRYTCANCGEGYHDRFKQPKVAGVCDVCGSAEFKRRPD) are LID. Arginine 127 serves as a coordination point for ATP. Residues cysteine 130, cysteine 133, cysteine 150, and cysteine 153 each contribute to the Zn(2+) site. AMP-binding residues include arginine 160 and arginine 172. Alanine 200 is an ATP binding site.

This sequence belongs to the adenylate kinase family. Monomer.

It localises to the cytoplasm. The enzyme catalyses AMP + ATP = 2 ADP. Its pathway is purine metabolism; AMP biosynthesis via salvage pathway; AMP from ADP: step 1/1. Its function is as follows. Catalyzes the reversible transfer of the terminal phosphate group between ATP and AMP. Plays an important role in cellular energy homeostasis and in adenine nucleotide metabolism. The chain is Adenylate kinase from Rhizorhabdus wittichii (strain DSM 6014 / CCUG 31198 / JCM 15750 / NBRC 105917 / EY 4224 / RW1) (Sphingomonas wittichii).